Consider the following 441-residue polypeptide: uncharacterized protein (441 aa).

A run of 11 helical transmembrane segments spans residues 68–88 (MAIAGAFAVLFLPYSLLGPFA), 110–130 (ALIAGVGTILAVGAGDVPLLV), 131–151 (GALVANGLARFVASGLSAALP), 164–184 (SVAIASGAVSAFLGANFMLLP), 194–214 (GASAIVFLVAIPVSIALLWSL), 229–246 (AIHGSAVYAVVTGWLHGA), 260–280 (SGLAAHRMVVGINSLLILLLV), 287–307 (AVGGLGTALLFFAATGLGAFL), 337–357 (VAAAGLLVPVMVVCGFLLGVA), 384–404 (VQDALFWVSYILSITVAAALI), and 412–432 (VFVLFGSAIYLAGLVVHTIVG).

This sequence belongs to the major facilitator superfamily.

It is found in the cell membrane. This is an uncharacterized protein from Mycobacterium tuberculosis (strain ATCC 25618 / H37Rv).